The chain runs to 274 residues: Thiamine kinase (274 aa).

Belongs to the thiamine kinase family.

The catalysed reaction is thiamine + ATP = thiamine phosphate + ADP + H(+). It functions in the pathway cofactor biosynthesis; thiamine diphosphate biosynthesis; thiamine phosphate from thiamine: step 1/1. In terms of biological role, catalyzes the ATP-dependent phosphorylation of thiamine to thiamine phosphate. Is involved in thiamine salvage. The protein is Thiamine kinase of Escherichia coli O81 (strain ED1a).